The sequence spans 109 residues: uncharacterized protein (109 aa).

The signal sequence occupies residues 1–22 (MKPYSTLFLFTLLTLTTVPAQA). Residues 39–109 (AYNPDHGRDY…ERRMEDEYGQ (71 aa)) form a disordered region. Over residues 41-109 (NPDHGRDYED…ERRMEDEYGQ (69 aa)) the composition is skewed to basic and acidic residues.

This is an uncharacterized protein from Shigella dysenteriae serotype 1 (strain Sd197).